A 513-amino-acid chain; its full sequence is Plexin domain-containing protein 2 (513 aa).

An N-terminal signal peptide occupies residues 1-24 (MGARSESLVGVVLLFQLLADRLWC). The Extracellular portion of the chain corresponds to 25 to 438 (AATASDSLYD…AEMKTGTLHT (414 aa)). N-linked (GlcNAc...) asparagine glycosylation is found at Asn-88, Asn-145, Asn-198, Asn-206, Asn-222, and Asn-330. The PSI domain occupies 312 to 357 (TCLQFNSCSSCVSSMIGFNCSWCNIPQRCSSGFDRHRQDWVENGCT). Residues 439–459 (GLIIGILILVLLIITAILVAV) traverse the membrane as a helical segment. Over 460–513 (YMYHHPTSSASLFLIERRPSRWPAMKFRRGSGHPAYAEVEPIGEKEGFIVSEQC) the chain is Cytoplasmic.

This sequence belongs to the plexin family.

The protein localises to the membrane. This Xenopus laevis (African clawed frog) protein is Plexin domain-containing protein 2 (plxdc2).